The chain runs to 206 residues: Protein GrpE (206 aa).

Over residues 1-17 (MSNESIKAEQDLIHEGV) the composition is skewed to basic and acidic residues. A disordered region spans residues 1-20 (MSNESIKAEQDLIHEGVESE).

The protein belongs to the GrpE family. As to quaternary structure, homodimer.

The protein localises to the cytoplasm. Functionally, participates actively in the response to hyperosmotic and heat shock by preventing the aggregation of stress-denatured proteins, in association with DnaK and GrpE. It is the nucleotide exchange factor for DnaK and may function as a thermosensor. Unfolded proteins bind initially to DnaJ; upon interaction with the DnaJ-bound protein, DnaK hydrolyzes its bound ATP, resulting in the formation of a stable complex. GrpE releases ADP from DnaK; ATP binding to DnaK triggers the release of the substrate protein, thus completing the reaction cycle. Several rounds of ATP-dependent interactions between DnaJ, DnaK and GrpE are required for fully efficient folding. This chain is Protein GrpE, found in Shewanella oneidensis (strain ATCC 700550 / JCM 31522 / CIP 106686 / LMG 19005 / NCIMB 14063 / MR-1).